A 209-amino-acid chain; its full sequence is Outer-membrane lipoprotein carrier protein (209 aa).

The first 21 residues, Met-1 to Ala-21, serve as a signal peptide directing secretion.

This sequence belongs to the LolA family. In terms of assembly, monomer.

Its subcellular location is the periplasm. Participates in the translocation of lipoproteins from the inner membrane to the outer membrane. Only forms a complex with a lipoprotein if the residue after the N-terminal Cys is not an aspartate (The Asp acts as a targeting signal to indicate that the lipoprotein should stay in the inner membrane). In Xanthomonas oryzae pv. oryzae (strain MAFF 311018), this protein is Outer-membrane lipoprotein carrier protein.